A 269-amino-acid chain; its full sequence is Phosphonoacetaldehyde hydrolase (269 aa).

The active-site Nucleophile is D10. Residues D10 and A12 each coordinate Mg(2+). The active-site Schiff-base intermediate with substrate is the K52. A Mg(2+)-binding site is contributed by D186.

The protein belongs to the HAD-like hydrolase superfamily. PhnX family. In terms of assembly, homodimer. Requires Mg(2+) as cofactor.

It catalyses the reaction phosphonoacetaldehyde + H2O = acetaldehyde + phosphate + H(+). Its function is as follows. Involved in phosphonate degradation. This is Phosphonoacetaldehyde hydrolase from Salmonella typhi.